We begin with the raw amino-acid sequence, 79 residues long: Acyl carrier protein (79 aa).

The Carrier domain occupies 3 to 78 (QEILEKVCSI…DAVKFIEEKK (76 aa)). Residue Ser-38 is modified to O-(pantetheine 4'-phosphoryl)serine.

The protein belongs to the acyl carrier protein (ACP) family. Post-translationally, 4'-phosphopantetheine is transferred from CoA to a specific serine of apo-ACP by AcpS. This modification is essential for activity because fatty acids are bound in thioester linkage to the sulfhydryl of the prosthetic group.

Its subcellular location is the cytoplasm. Its pathway is lipid metabolism; fatty acid biosynthesis. Functionally, carrier of the growing fatty acid chain in fatty acid biosynthesis. This Prochlorococcus marinus (strain MIT 9301) protein is Acyl carrier protein.